The primary structure comprises 513 residues: Matrix metalloproteinase-27 (513 aa).

An N-terminal signal peptide occupies residues 1–17 (MKRLLLLFLFFITFSSA). Residues 18–98 (FPLVRMTENE…PRCGVPDVGQ (81 aa)) constitute a propeptide, activation peptide. N-linked (GlcNAc...) asparagine glycosylation occurs at Asn55. Positions 89–96 (PRCGVPDV) match the Cysteine switch motif. Residue Cys91 coordinates Zn(2+). Asn110 is a glycosylation site (N-linked (GlcNAc...) asparagine). The Ca(2+) site is built by Asp121 and Asp155. His165 provides a ligand contact to Zn(2+). Ca(2+) contacts are provided by Asp173, Gly174, and Val178. His181 contacts Zn(2+). Residues Gly188 and Asp192 each coordinate Ca(2+). A Zn(2+)-binding site is contributed by His194. Residues Asp196 and Glu199 each coordinate Ca(2+). His216 is a Zn(2+) binding site. Residue Glu217 is part of the active site. His220 and His226 together coordinate Zn(2+). 4 Hemopexin repeats span residues 276–325 (PHAC…WPSL), 326–371 (PADL…GFPG), 373–421 (VKKI…FPGI), and 422–465 (SIRV…WFQC). Cysteines 279 and 465 form a disulfide. Asp286 lines the Ca(2+) pocket. Residues Asp377 and Asp426 each coordinate Ca(2+). An N-linked (GlcNAc...) asparagine glycan is attached at Asn452. The tract at residues 466 to 513 (KEPKNSSFGFDINKEKAHSGGIKILYHKSLSLFIFGIVHLLKNTSIYQ) is required for retention in the endoplasmic reticulum.

The protein belongs to the peptidase M10A family. Requires Ca(2+) as cofactor. The cofactor is Zn(2+). In terms of processing, N-glycosylated. In terms of tissue distribution, expressed in B-cells. Expressed in a subset of endometrial macrophages related to menstruation and in ovarian and peritoneal endometriotic lesions (at protein level).

The protein localises to the endoplasmic reticulum. Its function is as follows. Matrix metalloproteinases degrade protein components of the extracellular matrix such as fibronectin, laminin, gelatins and/or collagens. The sequence is that of Matrix metalloproteinase-27 (MMP27) from Homo sapiens (Human).